A 660-amino-acid chain; its full sequence is DNA mismatch repair protein MutL (660 aa).

The protein belongs to the DNA mismatch repair MutL/HexB family.

In terms of biological role, this protein is involved in the repair of mismatches in DNA. It is required for dam-dependent methyl-directed DNA mismatch repair. May act as a 'molecular matchmaker', a protein that promotes the formation of a stable complex between two or more DNA-binding proteins in an ATP-dependent manner without itself being part of a final effector complex. The polypeptide is DNA mismatch repair protein MutL (Solibacter usitatus (strain Ellin6076)).